Here is a 204-residue protein sequence, read N- to C-terminus: Large ribosomal subunit protein bL9 (204 aa).

Positions 180–204 (DDIGGAASDDEGDAPAAAADEEESK) are disordered. Residues 187–204 (SDDEGDAPAAAADEEESK) are compositionally biased toward acidic residues.

It belongs to the bacterial ribosomal protein bL9 family.

Binds to the 23S rRNA. The chain is Large ribosomal subunit protein bL9 from Ruegeria sp. (strain TM1040) (Silicibacter sp.).